Consider the following 479-residue polypeptide: Sodium-coupled neutral amino acid transporter 5 (479 aa).

The Cytoplasmic segment spans residues 1–58 (MAISCAVGMEMQEPKMNGTLSTGAAAGYRQEREGFLPTTHGPAPGRKPVQFLDFEGKT). The chain crosses the membrane as a helical span at residues 59 to 81 (SFGMSVFNLSNAIMGSGILGLAY). At 82–97 (AMAHTGVIFFLALLLC) the chain is on the extracellular side. The helical transmembrane segment at 98–118 (IALLSSYSIHLLLTCASVVGI) threads the bilayer. At 119 to 135 (RAYEQLGQRAFGPAGKV) the chain is on the cytoplasmic side. Residues 136–156 (VVAIIICLHNVGAMSSYLFII) traverse the membrane as a helical segment. At 157–176 (KSELPLVIGTFLHMDPEGDW) the chain is on the extracellular side. Residues 177–197 (FLKGNLLIILVSLLIILPLAL) form a helical membrane-spanning segment. The Cytoplasmic segment spans residues 198 to 202 (MKHLG). The helical transmembrane segment at 203-223 (YLGYTSSLSLTCMLFFLISVI) threads the bilayer. The Extracellular portion of the chain corresponds to 224-264 (YKKFQLGCVVSHNDTVVESEPAPLQAFNSSCEAKLFTVDSQ). C231 and C254 are joined by a disulfide. An N-linked (GlcNAc...) asparagine glycan is attached at N236. The helical transmembrane segment at 265-285 (MSYTVPIMAFAFVCHPEVLPI) threads the bilayer. The Cytoplasmic portion of the chain corresponds to 286–302 (YTELCCPTQRRMQAVAN). Residues 303 to 323 (MSIGAMFIMYGLTATFGYLTF) form a helical membrane-spanning segment. Residues 324–341 (YSTVKAEMLEMYTQEDLL) are Extracellular-facing. Residues 342–362 (ILCVRLAVLLAVTLTVPVVLF) form a helical membrane-spanning segment. The Cytoplasmic portion of the chain corresponds to 363-383 (PIRRALQQLLFPSKAFSWPRH). A helical membrane pass occupies residues 384–404 (VAIALILLILVNILVICVPTI). Residues 405–406 (RD) lie on the Extracellular side of the membrane. A helical transmembrane segment spans residues 407-427 (IFGFIGSTSAPSLIFILPSVF). Topologically, residues 428–446 (YLRIVPADMEPLFSWPKIQ) are cytoplasmic. The helical transmembrane segment at 447–467 (ALCFGVLGVLFMAISLGFMFA) threads the bilayer. Residues 468–479 (NWATGQSRMSGH) lie on the Extracellular side of the membrane.

The protein belongs to the amino acid/polyamine transporter 2 family. In terms of tissue distribution, highly expressed in neocortex, hippocampus, striatum and spinal cord by astrocytes (at protein level). Expressed in brain, lung, stomach, kidney, spleen and testis. Expressed in the cerebral cortex between the second and third postnatal week, where expressed exclusively in glial cells from postnatal day 14 to adulthood (at protein level). Expressed in the cerebellum at post natal day 12 (P12). Expressed in liver. Expressed inside the cell body of the astrocytes.

Its subcellular location is the cell membrane. It catalyses the reaction L-serine(out) + Na(+)(out) + H(+)(in) = L-serine(in) + Na(+)(in) + H(+)(out). The catalysed reaction is L-alanine(out) + Na(+)(out) + H(+)(in) = L-alanine(in) + Na(+)(in) + H(+)(out). The enzyme catalyses glycine(out) + Na(+)(out) + H(+)(in) = glycine(in) + Na(+)(in) + H(+)(out). It carries out the reaction L-glutamine(out) + Na(+)(out) + H(+)(in) = L-glutamine(in) + Na(+)(in) + H(+)(out). It catalyses the reaction L-asparagine(out) + Na(+)(out) + H(+)(in) = L-asparagine(in) + Na(+)(in) + H(+)(out). The catalysed reaction is L-histidine(out) + Na(+)(out) + H(+)(in) = L-histidine(in) + Na(+)(in) + H(+)(out). The enzyme catalyses L-cysteine(out) + Na(+)(out) + H(+)(in) = L-cysteine(in) + Na(+)(in) + H(+)(out). Its activity is regulated as follows. Not inhibited by lithium. Partial allosteric regulation on ions sodium binding. Symporter that cotransports neutral amino acids and sodium ions, coupled to an H(+) antiporter activity. Releases L-glutamine and glycine from astroglial cells and may participate in the glutamate/GABA-glutamine cycle and the NMDA receptors activation. In addition contributes significantly to L-glutamine uptake in retina, namely in ganglion and Mueller cells and, therefore participates in the retinal glutamate-glutamine cycle. The transport activity is pH sensitive, Li(+) tolerant, bidirectional and associated with large uncoupled fluxes of protons. The transport is electroneutral coupled to the cotransport of 1 Na(+) and the antiport of 1 H(+). May have particular importance for modulation of net hepatic glutamine flux. The chain is Sodium-coupled neutral amino acid transporter 5 from Rattus norvegicus (Rat).